The primary structure comprises 402 residues: Dual-specificity RNA methyltransferase RlmN (402 aa).

Glutamate 94 functions as the Proton acceptor in the catalytic mechanism. The 252-residue stretch at 100–351 (EDDRGTLCIS…ATVRKTRGDD (252 aa)) folds into the Radical SAM core domain. A disulfide bond links cysteine 107 and cysteine 356. The [4Fe-4S] cluster site is built by cysteine 114, cysteine 118, and cysteine 121. S-adenosyl-L-methionine contacts are provided by residues 182-183 (GE), serine 214, 236-238 (SLH), and asparagine 313. Catalysis depends on cysteine 356, which acts as the S-methylcysteine intermediate.

This sequence belongs to the radical SAM superfamily. RlmN family. The cofactor is [4Fe-4S] cluster.

It is found in the cytoplasm. It catalyses the reaction adenosine(2503) in 23S rRNA + 2 reduced [2Fe-2S]-[ferredoxin] + 2 S-adenosyl-L-methionine = 2-methyladenosine(2503) in 23S rRNA + 5'-deoxyadenosine + L-methionine + 2 oxidized [2Fe-2S]-[ferredoxin] + S-adenosyl-L-homocysteine. It carries out the reaction adenosine(37) in tRNA + 2 reduced [2Fe-2S]-[ferredoxin] + 2 S-adenosyl-L-methionine = 2-methyladenosine(37) in tRNA + 5'-deoxyadenosine + L-methionine + 2 oxidized [2Fe-2S]-[ferredoxin] + S-adenosyl-L-homocysteine. In terms of biological role, specifically methylates position 2 of adenine 2503 in 23S rRNA and position 2 of adenine 37 in tRNAs. m2A2503 modification seems to play a crucial role in the proofreading step occurring at the peptidyl transferase center and thus would serve to optimize ribosomal fidelity. The protein is Dual-specificity RNA methyltransferase RlmN of Polynucleobacter asymbioticus (strain DSM 18221 / CIP 109841 / QLW-P1DMWA-1) (Polynucleobacter necessarius subsp. asymbioticus).